A 502-amino-acid chain; its full sequence is Sodium/proline symporter (502 aa).

Topologically, residues 1–5 (MAIST) are periplasmic. A helical membrane pass occupies residues 6–26 (PMLVTFCVYIFGMILIGFIAW). Residues 27–41 (RSTKNFDDYILGGRS) lie on the Cytoplasmic side of the membrane. Hydrophilic regions lie at residues 27-66 (RSTK…GLPG) and 88-124 (INWK…KSRI). A helical transmembrane segment spans residues 42–62 (LGPFVTALSAGASDMSGWLLM). At 63–67 (GLPGA) the chain is on the periplasmic side. Residues 68 to 88 (VFLSGISESWIAIGLTLGAWI) traverse the membrane as a helical segment. The Cytoplasmic portion of the chain corresponds to 89–126 (NWKLVAGRLRVHTEYNNNALTLPDYFTGRFEDKSRILR). The helical transmembrane segment at 127-147 (IISALVILLFFTIYCASGIVA) threads the bilayer. Topologically, residues 148 to 162 (GARLFESTFGMSYET) are periplasmic. The interval 151–162 (LFESTFGMSYET) is hydrophilic. Residues 163-183 (ALWAGAAATILYTFIGGFLAV) form a helical membrane-spanning segment. The Cytoplasmic portion of the chain corresponds to 184–192 (SWTDTVQAS). The segment at 185-189 (WTDTV) is hydrophilic. The chain crosses the membrane as a helical span at residues 193-213 (LMIFALILTPVIVIISVGGFG). 3 hydrophilic regions span residues 214–231 (DSLE…DMLK), 249–274 (FGQP…RRIS), and 296–319 (FNDH…ELAQ). The Periplasmic portion of the chain corresponds to 214–234 (DSLEVIKQKSIENVDMLKGLN). A helical transmembrane segment spans residues 235–255 (FVAIISLMGWGLGYFGQPHIL). Topologically, residues 256-275 (ARFMAADSHHSIVHARRISM) are cytoplasmic. The helical transmembrane segment at 276–296 (TWMILCLAGAVAVGFFGIAYF) threads the bilayer. At 297-319 (NDHPALAGAVNQNAERVFIELAQ) the chain is on the periplasmic side. Residues 320–340 (ILFNPWIAGILLSAILAAVMS) form a helical membrane-spanning segment. The Cytoplasmic segment spans residues 341-370 (TLSCQLLVCSSAITEDLYKAFLRKHASQKE). Residues 341–370 (TLSCQLLVCSSAITEDLYKAFLRKHASQKE) are hydrophilic. A helical transmembrane segment spans residues 371–391 (LVWVGRVMVLVVALVAIALAA). At 392–397 (NPENRV) the chain is on the periplasmic side. Residues 392–397 (NPENRV) are hydrophilic. A helical transmembrane segment spans residues 398-418 (LGLVSYAWAGFGAAFGPVVLF). Residues 419–427 (SVMWSRMTR) lie on the Cytoplasmic side of the membrane. Hydrophilic regions lie at residues 424–430 (RMTRNGA) and 446–448 (QFG). 2 helical membrane-spanning segments follow: residues 428–448 (NGAL…KQFG) and 449–469 (WLGL…IVVF). At 470-502 (SLLGKAPSAAMQKRFAEADAHYHSAPPSRLQES) the chain is on the cytoplasmic side. The hydrophilic stretch occupies residues 476–502 (PSAAMQKRFAEADAHYHSAPPSRLQES).

Belongs to the sodium:solute symporter (SSF) (TC 2.A.21) family. As to quaternary structure, has been isolated from inner membrane preparations as a homodimer.

The protein localises to the cell inner membrane. It catalyses the reaction L-proline(in) + Na(+)(in) = L-proline(out) + Na(+)(out). Activity is stimulated by phosphatidylethanolamine and phosphatidylglycerol, but not by phosphatidylcholine and cardiolipin. Proline uptake is inhibited by the sulfhydryl reagent N-ethylmaleimide (NEM). Proline, in the presence of Na(+) or Li(+), protects the carrier functions from NEM-inactivation. Its function is as follows. Catalyzes the sodium-dependent uptake of extracellular L-proline. This protein is also capable of using lithium as the transport cation. Also catalyzes the uptake of propionate. This chain is Sodium/proline symporter (putP), found in Escherichia coli (strain K12).